The sequence spans 140 residues: Nucleoside diphosphate kinase (140 aa).

6 residues coordinate ATP: K10, F58, R86, T92, R103, and N113. H116 (pros-phosphohistidine intermediate) is an active-site residue.

Belongs to the NDK family. Homotetramer. It depends on Mg(2+) as a cofactor.

Its subcellular location is the cytoplasm. The enzyme catalyses a 2'-deoxyribonucleoside 5'-diphosphate + ATP = a 2'-deoxyribonucleoside 5'-triphosphate + ADP. It catalyses the reaction a ribonucleoside 5'-diphosphate + ATP = a ribonucleoside 5'-triphosphate + ADP. Its function is as follows. Major role in the synthesis of nucleoside triphosphates other than ATP. The ATP gamma phosphate is transferred to the NDP beta phosphate via a ping-pong mechanism, using a phosphorylated active-site intermediate. The sequence is that of Nucleoside diphosphate kinase from Haemophilus influenzae (strain PittEE).